The primary structure comprises 1140 residues: Eukaryotic translation initiation factor 3 subunit A (1140 aa).

The 184-residue stretch at 319–502 (LQRMAAHVLL…NSIYFGTDLT (184 aa)) folds into the PCI domain. 3 stretches are compositionally biased toward basic and acidic residues: residues 589 to 624 (QNNAREEEEARRQEEESRKAKLAEQKRLEQEQEERE), 830 to 900 (AAEE…RGGD), and 921 to 984 (ERND…EPDS). Disordered stretches follow at residues 589 to 632 (QNNA…QNEI) and 830 to 1140 (AAEE…VKRR). Over residues 987 to 998 (AAGAKDAGGAPA) the composition is skewed to low complexity. Composition is skewed to basic and acidic residues over residues 999–1050 (SRDD…EPQR), 1058–1086 (DAPRQSDRDNRRPGGERRDRDGRDVRGDQ), and 1109–1130 (PRDEKPAAKRDQPQDKENKGGD).

The protein belongs to the eIF-3 subunit A family. As to quaternary structure, component of the eukaryotic translation initiation factor 3 (eIF-3) complex. The eIF-3 complex interacts with pix.

The protein resides in the cytoplasm. RNA-binding component of the eukaryotic translation initiation factor 3 (eIF-3) complex, which is involved in protein synthesis of a specialized repertoire of mRNAs and, together with other initiation factors, stimulates binding of mRNA and methionyl-tRNAi to the 40S ribosome. The eIF-3 complex specifically targets and initiates translation of a subset of mRNAs involved in cell proliferation. This Drosophila ananassae (Fruit fly) protein is Eukaryotic translation initiation factor 3 subunit A.